A 257-amino-acid chain; its full sequence is Imidazole glycerol phosphate synthase subunit HisF (257 aa).

Residues Asp-11 and Asp-130 contribute to the active site.

It belongs to the HisA/HisF family. As to quaternary structure, heterodimer of HisH and HisF.

The protein resides in the cytoplasm. It catalyses the reaction 5-[(5-phospho-1-deoxy-D-ribulos-1-ylimino)methylamino]-1-(5-phospho-beta-D-ribosyl)imidazole-4-carboxamide + L-glutamine = D-erythro-1-(imidazol-4-yl)glycerol 3-phosphate + 5-amino-1-(5-phospho-beta-D-ribosyl)imidazole-4-carboxamide + L-glutamate + H(+). Its pathway is amino-acid biosynthesis; L-histidine biosynthesis; L-histidine from 5-phospho-alpha-D-ribose 1-diphosphate: step 5/9. Functionally, IGPS catalyzes the conversion of PRFAR and glutamine to IGP, AICAR and glutamate. The HisF subunit catalyzes the cyclization activity that produces IGP and AICAR from PRFAR using the ammonia provided by the HisH subunit. The polypeptide is Imidazole glycerol phosphate synthase subunit HisF (Shewanella sp. (strain MR-4)).